We begin with the raw amino-acid sequence, 593 residues long: Aspartate--tRNA(Asp/Asn) ligase (593 aa).

Residue Glu-173 participates in L-aspartate binding. The segment at 197-200 (QLFK) is aspartate. An L-aspartate-binding site is contributed by Arg-219. Residues 219–221 (RDE) and Gln-228 contribute to the ATP site. His-451 is an L-aspartate binding site. An ATP-binding site is contributed by Glu-485. Arg-492 is a binding site for L-aspartate. ATP is bound at residue 537–540 (GIDR).

Belongs to the class-II aminoacyl-tRNA synthetase family. Type 1 subfamily. As to quaternary structure, homodimer.

The protein localises to the cytoplasm. It carries out the reaction tRNA(Asx) + L-aspartate + ATP = L-aspartyl-tRNA(Asx) + AMP + diphosphate. Functionally, aspartyl-tRNA synthetase with relaxed tRNA specificity since it is able to aspartylate not only its cognate tRNA(Asp) but also tRNA(Asn). Reaction proceeds in two steps: L-aspartate is first activated by ATP to form Asp-AMP and then transferred to the acceptor end of tRNA(Asp/Asn). This chain is Aspartate--tRNA(Asp/Asn) ligase, found in Legionella pneumophila subsp. pneumophila (strain Philadelphia 1 / ATCC 33152 / DSM 7513).